The sequence spans 189 residues: Glutathione-dependent formaldehyde-activating enzyme (189 aa).

The region spanning 20–167 (FAGGTLVCKC…LKELGLEPYD (148 aa)) is the CENP-V/GFA domain. Zn(2+) is bound by residues Cys27, Cys29, Cys48, Cys50, Cys53, Cys95, and Cys98.

Belongs to the Gfa family. The cofactor is Zn(2+).

It carries out the reaction S-(hydroxymethyl)glutathione = glutathione + formaldehyde. Its pathway is one-carbon metabolism; formaldehyde degradation; formate from formaldehyde (glutathione route): step 1/3. Functionally, catalyzes the condensation of formaldehyde and glutathione to S-hydroxymethylglutathione. The protein is Glutathione-dependent formaldehyde-activating enzyme of Rhodopseudomonas palustris (strain BisA53).